Consider the following 931-residue polypeptide: Netrin receptor UNC5C (931 aa).

The N-terminal stretch at Met-1–Ala-40 is a signal peptide. The Extracellular segment spans residues Gln-41 to Tyr-380. Positions Pro-62 to Tyr-159 constitute an Ig-like domain. 9 cysteine pairs are disulfide-bonded: Cys-83–Cys-144, Cys-95–Cys-142, Cys-188–Cys-239, Cys-272–Cys-309, Cys-276–Cys-313, Cys-287–Cys-299, Cys-328–Cys-362, Cys-332–Cys-367, and Cys-340–Cys-352. The 96-residue stretch at Arg-161–Ile-256 folds into the Ig-like C2-type domain. N-linked (GlcNAc...) asparagine glycosylation occurs at Asn-236. TSP type-1 domains lie at Asn-260–Pro-314 and Asp-316–Met-368. An N-linked (GlcNAc...) asparagine glycan is attached at Asn-361. A helical membrane pass occupies residues Val-381–Val-401. At Tyr-402–Tyr-931 the chain is on the cytoplasmic side. A required for netrin-mediated axon repulsion of neuronal growth cones region spans residues Tyr-402–Tyr-931. Ser-502 is modified (phosphoserine). The region spanning Cys-530–Ser-673 is the ZU5 domain. Tyr-568 carries the post-translational modification Phosphotyrosine. Residues Ser-694–Lys-712 form an interaction with DCC region. Positions Gln-850–Gly-929 constitute a Death domain.

The protein belongs to the unc-5 family. In terms of assembly, interacts with DCC (via cytoplasmic domain). Interacts (tyrosine phosphorylated form) with PTPN11. Interacts (via extracellular domain) with FLRT3 (via extracellular domain). Interacts (via Ig-like C2-type domain) with DSCAM (via extracellular domain). Interacts (via death domain) with DAPK1. Interacts (via cytoplasmic domain) with TUBB3; this interaction is decreased by NTN1/Netrin-1. Proteolytically cleaved by caspases during apoptosis. The cleavage does not take place when the receptor is associated with netrin ligand. Its cleavage by caspases is required to induce apoptosis. In terms of processing, phosphorylated on different cytoplasmic tyrosine residues. Phosphorylation of Tyr-568 leads to an interaction with PTPN11 phosphatase, suggesting that its activity is regulated by phosphorylation/dephosphorylation. Tyrosine phosphorylation is netrin-dependent. As to expression, detected in brain (at protein level). Mainly expressed in brain. Also expressed in kidney. Not expressed in developing or adult lung.

It localises to the cell membrane. The protein localises to the cell surface. The protein resides in the synapse. It is found in the synaptosome. Its subcellular location is the cell projection. It localises to the axon. The protein localises to the dendrite. The protein resides in the growth cone. It is found in the lamellipodium. Its subcellular location is the filopodium. Receptor for netrin required for axon guidance. Mediates axon repulsion of neuronal growth cones in the developing nervous system upon ligand binding. NTN1/Netrin-1 binding might cause dissociation of UNC5C from polymerized TUBB3 in microtubules and thereby lead to increased microtubule dynamics and axon repulsion. Axon repulsion in growth cones may also be caused by its association with DCC that may trigger signaling for repulsion. Might also collaborate with DSCAM in NTN1-mediated axon repulsion independently of DCC. Also involved in corticospinal tract axon guidance independently of DCC. Involved in dorsal root ganglion axon projection towards the spinal cord. It also acts as a dependence receptor required for apoptosis induction when not associated with netrin ligand. This is Netrin receptor UNC5C (Unc5c) from Rattus norvegicus (Rat).